Here is a 465-residue protein sequence, read N- to C-terminus: Putrescine aminotransferase (465 aa).

Pyridoxal 5'-phosphate contacts are provided by residues 150-151 (GT) and glutamine 274. The residue at position 300 (lysine 300) is an N6-(pyridoxal phosphate)lysine. Residue threonine 332 coordinates pyridoxal 5'-phosphate.

Belongs to the class-III pyridoxal-phosphate-dependent aminotransferase family. Putrescine aminotransferase subfamily. Pyridoxal 5'-phosphate is required as a cofactor.

The catalysed reaction is an alkane-alpha,omega-diamine + 2-oxoglutarate = an omega-aminoaldehyde + L-glutamate. It catalyses the reaction putrescine + 2-oxoglutarate = 1-pyrroline + L-glutamate + H2O. The enzyme catalyses cadaverine + 2-oxoglutarate = 5-aminopentanal + L-glutamate. Its pathway is amine and polyamine degradation; putrescine degradation; 4-aminobutanal from putrescine (transaminase route): step 1/1. In terms of biological role, catalyzes the aminotransferase reaction from putrescine to 2-oxoglutarate, leading to glutamate and 4-aminobutanal, which spontaneously cyclizes to form 1-pyrroline. This is the first step in one of two pathways for putrescine degradation, where putrescine is converted into 4-aminobutanoate (gamma-aminobutyrate or GABA) via 4-aminobutanal. Also functions as a cadaverine transaminase in a a L-lysine degradation pathway to succinate that proceeds via cadaverine, glutarate and L-2-hydroxyglutarate. The polypeptide is Putrescine aminotransferase (Cronobacter sakazakii (strain ATCC BAA-894) (Enterobacter sakazakii)).